We begin with the raw amino-acid sequence, 443 residues long: Threonine/serine transporter TdcC (443 aa).

Transmembrane regions (helical) follow at residues 24–44 (WVLG…PISA), 45–65 (GIGG…IAFF), 95–115 (VGGV…LWIY), 140–160 (VVAL…KDLM), 163–183 (VMGY…LSLI), 207–227 (ILVT…FSPI), 259–279 (ASVL…FTLS), 319–339 (ASII…LGTL), 363–383 (LNMI…YINP), 385–405 (ILDL…CLLP), and 423–443 (SNYF…YQLM).

Belongs to the amino acid/polyamine transporter 2 family. SdaC/TdcC subfamily.

Its subcellular location is the cell inner membrane. It catalyses the reaction L-threonine(in) + H(+)(in) = L-threonine(out) + H(+)(out). The enzyme catalyses L-serine(in) + H(+)(in) = L-serine(out) + H(+)(out). Its function is as follows. Involved in the import of threonine and serine into the cell, with the concomitant import of a proton (symport system). The chain is Threonine/serine transporter TdcC from Edwardsiella tarda.